The chain runs to 277 residues: Type II restriction enzyme RsrI (277 aa).

The protein belongs to the EcoRI type II restriction endonuclease family. In terms of assembly, homodimer. The cofactor is Mg(2+).

The catalysed reaction is Endonucleolytic cleavage of DNA to give specific double-stranded fragments with terminal 5'-phosphates.. Functionally, a P subtype restriction enzyme that recognizes the double-stranded sequence 5'-GAATTC-3' and cleaves after G-1. The sequence is that of Type II restriction enzyme RsrI (rsrIR) from Cereibacter sphaeroides (Rhodobacter sphaeroides).